We begin with the raw amino-acid sequence, 72 residues long: Translation initiation factor IF-1 (72 aa).

Residues 1–72 enclose the S1-like domain; the sequence is MAKDDVIEVE…TRGRITYRYK (72 aa). At Y60 the chain carries Phosphotyrosine.

It belongs to the IF-1 family. As to quaternary structure, component of the 30S ribosomal translation pre-initiation complex which assembles on the 30S ribosome in the order IF-2 and IF-3, IF-1 and N-formylmethionyl-tRNA(fMet); mRNA recruitment can occur at any time during PIC assembly.

It localises to the cytoplasm. Functionally, one of the essential components for the initiation of protein synthesis. Stabilizes the binding of IF-2 and IF-3 on the 30S subunit to which N-formylmethionyl-tRNA(fMet) subsequently binds. Helps modulate mRNA selection, yielding the 30S pre-initiation complex (PIC). Upon addition of the 50S ribosomal subunit IF-1, IF-2 and IF-3 are released leaving the mature 70S translation initiation complex. The sequence is that of Translation initiation factor IF-1 from Geobacillus thermodenitrificans (strain NG80-2).